Consider the following 385-residue polypeptide: Putative non-inhibitory serpin-Z11 (385 aa).

The segment at 324–348 is RCL; sequence GTTAVEAMYSPSSPGYSPGYQPPRP.

This sequence belongs to the serpin family.

This Oryza sativa subsp. japonica (Rice) protein is Putative non-inhibitory serpin-Z11.